The sequence spans 337 residues: Holliday junction branch migration complex subunit RuvB (337 aa).

The tract at residues 4 to 184 is large ATPase domain (RuvB-L); that stretch reads ADRLIAPAAI…FGIVQRLEFY (181 aa). Residues isoleucine 23, arginine 24, glycine 65, lysine 68, threonine 69, threonine 70, 131-133, arginine 174, tyrosine 184, and arginine 221 each bind ATP; that span reads EDY. A Mg(2+)-binding site is contributed by threonine 69. Residues 185 to 255 form a small ATPAse domain (RuvB-S) region; the sequence is KVEDLAHIVG…IAAQALDMLD (71 aa). Positions 258 to 337 are head domain (RuvB-H); it reads NAGFDYMDRK…FGLTTPERQG (80 aa). Residues arginine 313 and arginine 318 each contribute to the DNA site.

Belongs to the RuvB family. Homohexamer. Forms an RuvA(8)-RuvB(12)-Holliday junction (HJ) complex. HJ DNA is sandwiched between 2 RuvA tetramers; dsDNA enters through RuvA and exits via RuvB. An RuvB hexamer assembles on each DNA strand where it exits the tetramer. Each RuvB hexamer is contacted by two RuvA subunits (via domain III) on 2 adjacent RuvB subunits; this complex drives branch migration. In the full resolvosome a probable DNA-RuvA(4)-RuvB(12)-RuvC(2) complex forms which resolves the HJ.

Its subcellular location is the cytoplasm. It carries out the reaction ATP + H2O = ADP + phosphate + H(+). The RuvA-RuvB-RuvC complex processes Holliday junction (HJ) DNA during genetic recombination and DNA repair, while the RuvA-RuvB complex plays an important role in the rescue of blocked DNA replication forks via replication fork reversal (RFR). RuvA specifically binds to HJ cruciform DNA, conferring on it an open structure. The RuvB hexamer acts as an ATP-dependent pump, pulling dsDNA into and through the RuvAB complex. RuvB forms 2 homohexamers on either side of HJ DNA bound by 1 or 2 RuvA tetramers; 4 subunits per hexamer contact DNA at a time. Coordinated motions by a converter formed by DNA-disengaged RuvB subunits stimulates ATP hydrolysis and nucleotide exchange. Immobilization of the converter enables RuvB to convert the ATP-contained energy into a lever motion, pulling 2 nucleotides of DNA out of the RuvA tetramer per ATP hydrolyzed, thus driving DNA branch migration. The RuvB motors rotate together with the DNA substrate, which together with the progressing nucleotide cycle form the mechanistic basis for DNA recombination by continuous HJ branch migration. Branch migration allows RuvC to scan DNA until it finds its consensus sequence, where it cleaves and resolves cruciform DNA. The sequence is that of Holliday junction branch migration complex subunit RuvB from Tolumonas auensis (strain DSM 9187 / NBRC 110442 / TA 4).